The following is a 500-amino-acid chain: Na(+)/H(+) antiporter NhaB (500 aa).

Helical transmembrane passes span 34 to 54 (LLLA…QFIF), 58 to 78 (MALK…ALLL), 96 to 116 (VILL…LLLF), 129 to 149 (AVLS…LDAL), 150 to 170 (TVTA…HRVA), 205 to 225 (LLMH…VGEP), 241 to 261 (FFLK…VTCV), 311 to 331 (ILIV…LMVI), 350 to 370 (FQDA…VAVI), 394 to 414 (MLYL…VATI), 450 to 470 (ATPN…APLI), and 477 to 497 (MVWM…WAVT).

Belongs to the NhaB Na(+)/H(+) (TC 2.A.34) antiporter family.

Its subcellular location is the cell inner membrane. The catalysed reaction is 2 Na(+)(in) + 3 H(+)(out) = 2 Na(+)(out) + 3 H(+)(in). Its function is as follows. Na(+)/H(+) antiporter that extrudes sodium in exchange for external protons. In Pseudomonas entomophila (strain L48), this protein is Na(+)/H(+) antiporter NhaB.